A 127-amino-acid polypeptide reads, in one-letter code: DNA-directed RNA polymerase subunit omega (127 aa).

The protein belongs to the RNA polymerase subunit omega family. The RNAP catalytic core consists of 2 alpha, 1 beta, 1 beta' and 1 omega subunit. When a sigma factor is associated with the core the holoenzyme is formed, which can initiate transcription.

The catalysed reaction is RNA(n) + a ribonucleoside 5'-triphosphate = RNA(n+1) + diphosphate. Its function is as follows. Promotes RNA polymerase assembly. Latches the N- and C-terminal regions of the beta' subunit thereby facilitating its interaction with the beta and alpha subunits. In Rickettsia canadensis (strain McKiel), this protein is DNA-directed RNA polymerase subunit omega.